We begin with the raw amino-acid sequence, 999 residues long: Caspase recruitment domain-containing protein 14 (999 aa).

The region spanning 15 to 107 (DEEMLWDMLE…DVYTLVTGLQ (93 aa)) is the CARD domain. Residues 125-411 (TECLAGAISS…QLRRLQAEAP (287 aa)) adopt a coiled-coil conformation. The interval 409-565 (EAPGGPKQEA…RRPARKILSQ (157 aa)) is maintains the protein in an inactive state. Ser541 is modified (phosphoserine). The 84-residue stretch at 572–655 (QGDALLEQIG…SCYLSVKINT (84 aa)) folds into the PDZ domain. Residues 803 to 986 (SESCFTLAPY…LLSCVRLAIA (184 aa)) enclose the Guanylate kinase-like domain.

Interacts (via CARD domain) with BCL10 (via CARD domain). Forms a complex with MALT1 and BCL10; resulting in the formation of a CBM (CARD14-BLC10-MALT1) complex. Interacts with TRAF2, TRAF3 and TRAF6.

The protein localises to the cytoplasm. Its function is as follows. Acts as a scaffolding protein that can activate the inflammatory transcription factor NF-kappa-B and p38/JNK MAP kinase signaling pathways. Forms a signaling complex with BCL10 and MALT1, and activates MALT1 proteolytic activity and inflammatory gene expression. MALT1 is indispensable for CARD14-induced activation of NF-kappa-B and p38/JNK MAP kinases. May play a role in signaling mediated by TRAF2, TRAF3 and TRAF6 and protects cells against apoptosis. The chain is Caspase recruitment domain-containing protein 14 (Card14) from Mus musculus (Mouse).